The following is a 446-amino-acid chain: Methanogenesis regulatory protein FilR1 (446 aa).

Positions 297–416 constitute a Response regulatory domain; sequence DVMIVEDDLG…QRLPEIAEEA (120 aa). D350 carries the post-translational modification 4-aspartylphosphate.

Post-translationally, phosphorylated by FilI.

Member of the two-component regulatory system FilI/FilRs, which is involved in the regulation of methanogenesis. Regulates its own expression, expression of the filI-filR2 operon, and of genes involved in methanogenesis such as acs1, acs4 and mtrABC. Acts by binding to the promoters. This Methanothrix harundinacea (strain 6Ac) (Methanosaeta harundinacea) protein is Methanogenesis regulatory protein FilR1.